A 572-amino-acid chain; its full sequence is Proline--tRNA ligase (572 aa).

It belongs to the class-II aminoacyl-tRNA synthetase family. ProS type 1 subfamily. As to quaternary structure, homodimer.

The protein localises to the cytoplasm. The enzyme catalyses tRNA(Pro) + L-proline + ATP = L-prolyl-tRNA(Pro) + AMP + diphosphate. Its function is as follows. Catalyzes the attachment of proline to tRNA(Pro) in a two-step reaction: proline is first activated by ATP to form Pro-AMP and then transferred to the acceptor end of tRNA(Pro). As ProRS can inadvertently accommodate and process non-cognate amino acids such as alanine and cysteine, to avoid such errors it has two additional distinct editing activities against alanine. One activity is designated as 'pretransfer' editing and involves the tRNA(Pro)-independent hydrolysis of activated Ala-AMP. The other activity is designated 'posttransfer' editing and involves deacylation of mischarged Ala-tRNA(Pro). The misacylated Cys-tRNA(Pro) is not edited by ProRS. The polypeptide is Proline--tRNA ligase (Escherichia coli (strain K12 / MC4100 / BW2952)).